A 279-amino-acid polypeptide reads, in one-letter code: DegV domain-containing protein CPE1310 (279 aa).

Positions 4–277 (IKIITDSTCD…PKVCALFYVE (274 aa)) constitute a DegV domain. Residues Thr-62 and Ser-94 each contribute to the hexadecanoate site.

May bind long-chain fatty acids, such as palmitate, and may play a role in lipid transport or fatty acid metabolism. The sequence is that of DegV domain-containing protein CPE1310 from Clostridium perfringens (strain 13 / Type A).